The following is a 258-amino-acid chain: Ribosomal RNA small subunit methyltransferase A (258 aa).

The S-adenosyl-L-methionine site is built by His-13, Leu-15, Gly-40, Glu-62, Asp-87, and Asn-108.

The protein belongs to the class I-like SAM-binding methyltransferase superfamily. rRNA adenine N(6)-methyltransferase family. RsmA subfamily.

The protein resides in the cytoplasm. It catalyses the reaction adenosine(1518)/adenosine(1519) in 16S rRNA + 4 S-adenosyl-L-methionine = N(6)-dimethyladenosine(1518)/N(6)-dimethyladenosine(1519) in 16S rRNA + 4 S-adenosyl-L-homocysteine + 4 H(+). In terms of biological role, specifically dimethylates two adjacent adenosines (A1518 and A1519) in the loop of a conserved hairpin near the 3'-end of 16S rRNA in the 30S particle. May play a critical role in biogenesis of 30S subunits. The chain is Ribosomal RNA small subunit methyltransferase A from Sulfurihydrogenibium sp. (strain YO3AOP1).